Consider the following 354-residue polypeptide: Protein PHLOEM PROTEIN 2-LIKE A8 (354 aa).

In terms of domain architecture, TIR spans 12–179 (TGPQVFINFR…EMILEIQKAL (168 aa)). The active site involves E86.

It catalyses the reaction NAD(+) + H2O = ADP-D-ribose + nicotinamide + H(+). The chain is Protein PHLOEM PROTEIN 2-LIKE A8 (PP2A8) from Arabidopsis thaliana (Mouse-ear cress).